The following is a 277-amino-acid chain: 2-dehydro-3-deoxyphosphooctonate aldolase (277 aa).

It belongs to the KdsA family.

The protein resides in the cytoplasm. It carries out the reaction D-arabinose 5-phosphate + phosphoenolpyruvate + H2O = 3-deoxy-alpha-D-manno-2-octulosonate-8-phosphate + phosphate. Its pathway is carbohydrate biosynthesis; 3-deoxy-D-manno-octulosonate biosynthesis; 3-deoxy-D-manno-octulosonate from D-ribulose 5-phosphate: step 2/3. The protein operates within bacterial outer membrane biogenesis; lipopolysaccharide biosynthesis. The polypeptide is 2-dehydro-3-deoxyphosphooctonate aldolase (Syntrophotalea carbinolica (strain DSM 2380 / NBRC 103641 / GraBd1) (Pelobacter carbinolicus)).